The sequence spans 71 residues: DNA-directed RNA polymerase subunit Rpo10 (71 aa).

Cys6, Cys9, Cys52, and Cys53 together coordinate Zn(2+).

It belongs to the archaeal Rpo10/eukaryotic RPB10 RNA polymerase subunit family. Part of the RNA polymerase complex. Zn(2+) is required as a cofactor.

The protein localises to the cytoplasm. The catalysed reaction is RNA(n) + a ribonucleoside 5'-triphosphate = RNA(n+1) + diphosphate. DNA-dependent RNA polymerase (RNAP) catalyzes the transcription of DNA into RNA using the four ribonucleoside triphosphates as substrates. The sequence is that of DNA-directed RNA polymerase subunit Rpo10 from Methanocella arvoryzae (strain DSM 22066 / NBRC 105507 / MRE50).